Consider the following 977-residue polypeptide: Mast/stem cell growth factor receptor Kit (977 aa).

An N-terminal signal peptide occupies residues 1–25; sequence MRGARGAWDFLFVLLLLLLVQTGSS. The Extracellular segment spans residues 26–525; that stretch reads QPSVSPGELS…QIHAHTLFTP (500 aa). Ig-like C2-type domains lie at 27–112, 121–205, 212–309, 318–411, and 414–508; these read PSVS…VFVR, DLPL…LKVR, PVVS…LEVV, PMMN…VYVN, and PEIL…FNFA. C58 and C97 are disulfide-bonded. N94, N130, and N145 each carry an N-linked (GlcNAc...) asparagine glycan. Intrachain disulfides connect C136–C186, C151–C183, and C233–C291. Residues N284, N294, N301, N321, N353, N368, N401, N464, and N487 are each glycosylated (N-linked (GlcNAc...) asparagine). C429 and C492 form a disulfide bridge. The helical transmembrane segment at 526-546 threads the bilayer; that stretch reads LLIGFVIAAGLMCIFVMILTY. At 547-977 the chain is on the cytoplasmic side; it reads KYLQKPMYEV…TQPLLVHEDV (431 aa). A phosphotyrosine mark is found at Y548 and Y554. Y569 contacts Mg(2+). A phosphotyrosine; by autocatalysis mark is found at Y569 and Y571. Residues 569–571 form an important for interaction with phosphotyrosine-binding proteins region; that stretch reads YVY. The region spanning 590–938 is the Protein kinase domain; the sequence is LSFGKTLGAG…ISESTNHIYS (349 aa). ATP contacts are provided by residues 597–604, K624, and 672–678; these read GAGAFGKV and EYCCYGD. Phosphotyrosine; by autocatalysis occurs at positions 704 and 722. Residue Y731 is modified to Phosphotyrosine. Phosphoserine; by PKC/PRKCA is present on residues S742 and S747. D793 functions as the Proton acceptor in the catalytic mechanism. An ATP-binding site is contributed by R797. The Mg(2+) site is built by N798 and D811. At S822 the chain carries Phosphoserine. Y824 carries the post-translational modification Phosphotyrosine; by autocatalysis. Position 892 is a phosphoserine (S892). Residue Y901 is modified to Phosphotyrosine. Phosphotyrosine; by autocatalysis is present on Y937. S960 is modified (phosphoserine).

Belongs to the protein kinase superfamily. Tyr protein kinase family. CSF-1/PDGF receptor subfamily. As to quaternary structure, monomer in the absence of bound KITLG/SCF. Homodimer in the presence of bound KITLG/SCF, forming a heterotetramer with two KITLG/SCF molecules. Interacts (via phosphorylated tyrosine residues) with the adapter proteins GRB2 and GRB7 (via SH2 domain), and SH2B2/APS. Interacts (via C-terminus) with MPDZ (via the tenth PDZ domain). Interacts (via phosphorylated tyrosine residues) with PIK3R1 and PIK3CD. Interacts (via phosphorylated tyrosine) with CRK (isoform Crk-II), FYN, SHC1 and MATK/CHK (via SH2 domain). Interacts with LYN and FES/FPS. Interacts (via phosphorylated tyrosine residues) with the protein phosphatases PTPN6/SHP-1 (via SH2 domain), PTPN11/SHP-2 (via SH2 domain) and PTPRU. Interacts with PLCG1. Interacts with DOK1 and TEC. Interacts with IL1RAP (independent of stimulation with KITLG/SCF). A mast cell-specific KITLG/SCF-induced interleukin-33 signaling complex contains IL1RL1, IL1RAP, KIT and MYD88. Ubiquitinated by SOCS6. KIT is rapidly ubiquitinated after autophosphorylation induced by KITLG/SCF binding, leading to internalization and degradation. In terms of processing, autophosphorylated on tyrosine residues. KITLG/SCF binding promotes autophosphorylation. Phosphorylated tyrosine residues are important for interaction with specific binding partners.

The protein localises to the cell membrane. It catalyses the reaction L-tyrosyl-[protein] + ATP = O-phospho-L-tyrosyl-[protein] + ADP + H(+). Its activity is regulated as follows. Present in an inactive conformation in the absence of bound ligand. KITLG/SCF binding leads to dimerization and activation by autophosphorylation on tyrosine residues. Activity is down-regulated by PRKCA-mediated phosphorylation on serine residues. Functionally, tyrosine-protein kinase that acts as a cell-surface receptor for the cytokine KITLG/SCF and plays an essential role in the regulation of cell survival and proliferation, hematopoiesis, stem cell maintenance, gametogenesis, mast cell development, migration and function, and in melanogenesis. In response to KITLG/SCF binding, KIT can activate several signaling pathways. Phosphorylates PIK3R1, PLCG1, SH2B2/APS and CBL. Activates the AKT1 signaling pathway by phosphorylation of PIK3R1, the regulatory subunit of phosphatidylinositol 3-kinase. Activated KIT also transmits signals via GRB2 and activation of RAS, RAF1 and the MAP kinases MAPK1/ERK2 and/or MAPK3/ERK1. Promotes activation of STAT family members STAT1, STAT3, STAT5A and STAT5B. Activation of PLCG1 leads to the production of the cellular signaling molecules diacylglycerol and inositol 1,4,5-trisphosphate. KIT signaling is modulated by protein phosphatases, and by rapid internalization and degradation of the receptor. Activated KIT promotes phosphorylation of the protein phosphatases PTPN6/SHP-1 and PTPRU, and of the transcription factors STAT1, STAT3, STAT5A and STAT5B. Promotes phosphorylation of PIK3R1, CBL, CRK (isoform Crk-II), LYN, MAPK1/ERK2 and/or MAPK3/ERK1, PLCG1, SRC and SHC1. The protein is Mast/stem cell growth factor receptor Kit (KIT) of Bos taurus (Bovine).